A 337-amino-acid chain; its full sequence is Glycerol-3-phosphate dehydrogenase [NAD(P)+] (337 aa).

Residues Ser11, Trp12, Arg32, and Lys109 each contribute to the NADPH site. 3 residues coordinate sn-glycerol 3-phosphate: Lys109, Gly140, and Ser142. Ala144 lines the NADPH pocket. Residues Lys195, Asp248, Ser258, Arg259, and Asn260 each coordinate sn-glycerol 3-phosphate. The active-site Proton acceptor is the Lys195. Arg259 contributes to the NADPH binding site. The NADPH site is built by Val283 and Glu285.

This sequence belongs to the NAD-dependent glycerol-3-phosphate dehydrogenase family.

It localises to the cytoplasm. It carries out the reaction sn-glycerol 3-phosphate + NAD(+) = dihydroxyacetone phosphate + NADH + H(+). The catalysed reaction is sn-glycerol 3-phosphate + NADP(+) = dihydroxyacetone phosphate + NADPH + H(+). It functions in the pathway membrane lipid metabolism; glycerophospholipid metabolism. Catalyzes the reduction of the glycolytic intermediate dihydroxyacetone phosphate (DHAP) to sn-glycerol 3-phosphate (G3P), the key precursor for phospholipid synthesis. This is Glycerol-3-phosphate dehydrogenase [NAD(P)+] from Limosilactobacillus fermentum (strain NBRC 3956 / LMG 18251) (Lactobacillus fermentum).